The following is a 208-amino-acid chain: Meiotically up-regulated gene 9 protein (208 aa).

Residues 77–114 (VPASNEKAARVSNLKTVPSLKRENKEVNANSKPPVKQQ) form a disordered region.

In terms of biological role, has a role in meiosis. The protein is Meiotically up-regulated gene 9 protein (mug9) of Schizosaccharomyces pombe (strain 972 / ATCC 24843) (Fission yeast).